Here is a 133-residue protein sequence, read N- to C-terminus: Ribosome-binding factor A (133 aa).

The protein belongs to the RbfA family. Monomer. Binds 30S ribosomal subunits, but not 50S ribosomal subunits or 70S ribosomes.

It is found in the cytoplasm. One of several proteins that assist in the late maturation steps of the functional core of the 30S ribosomal subunit. Associates with free 30S ribosomal subunits (but not with 30S subunits that are part of 70S ribosomes or polysomes). Required for efficient processing of 16S rRNA. May interact with the 5'-terminal helix region of 16S rRNA. The sequence is that of Ribosome-binding factor A from Enterobacter sp. (strain 638).